The sequence spans 369 residues: Arsenite methyltransferase (369 aa).

Ser-46 carries the phosphoserine modification.

This sequence belongs to the methyltransferase superfamily. Arsenite methyltransferase family.

The protein localises to the cytoplasm. Its subcellular location is the cytosol. It catalyses the reaction arsenic triglutathione + [thioredoxin]-dithiol + S-adenosyl-L-methionine + 2 H2O = methylarsonous acid + [thioredoxin]-disulfide + 3 glutathione + S-adenosyl-L-homocysteine + H(+). It carries out the reaction arsenic triglutathione + 2 [thioredoxin]-dithiol + 2 S-adenosyl-L-methionine + H2O = dimethylarsinous acid + 2 [thioredoxin]-disulfide + 3 glutathione + 2 S-adenosyl-L-homocysteine + 2 H(+). The catalysed reaction is arsenic triglutathione + 3 [thioredoxin]-dithiol + 3 S-adenosyl-L-methionine = trimethylarsine + 3 [thioredoxin]-disulfide + 3 glutathione + 3 S-adenosyl-L-homocysteine + 3 H(+). In terms of biological role, catalyzes the transfer of a methyl group from AdoMet to trivalent arsenicals producing methylated and dimethylated arsenicals. It methylates arsenite to form methylarsonate, Me-AsO(3)H(2), which is reduced by methylarsonate reductase to methylarsonite, Me-As(OH)2. Methylarsonite is also a substrate and it is converted into the much less toxic compound dimethylarsinate (cacodylate), Me(2)As(O)-OH. The sequence is that of Arsenite methyltransferase (As3mt) from Rattus norvegicus (Rat).